A 173-amino-acid chain; its full sequence is Large ribosomal subunit protein bL9 (173 aa).

Belongs to the bacterial ribosomal protein bL9 family.

Binds to the 23S rRNA. The sequence is that of Large ribosomal subunit protein bL9 from Chlamydia felis (strain Fe/C-56) (Chlamydophila felis).